We begin with the raw amino-acid sequence, 283 residues long: Myeloid differentiation primary response protein MyD88-B (283 aa).

A Death domain is found at 27–105 (RLCLYLNPNA…DILTDLAPLI (79 aa)). The tract at residues 106 to 143 (EADCKKYLEKKHGPLPLQDDNVDSSEQYRITKSDDPYG) is intermediate domain. Positions 147-281 (ETFDAFICCC…WFWDKLAKAL (135 aa)) constitute a TIR domain.

It localises to the cytoplasm. Its function is as follows. Adapter protein involved in the Toll-like receptor and IL-1 receptor signaling pathway in the innate immune response. Activates expression of target genes in the Spemann organizer region during early embryonic development. Is required for normal axis formation. The sequence is that of Myeloid differentiation primary response protein MyD88-B (myd88-b) from Xenopus laevis (African clawed frog).